Reading from the N-terminus, the 283-residue chain is Bifunctional protein FolD (283 aa).

Residues 165-167, Ser-190, and Val-231 contribute to the NADP(+) site; that span reads GRS.

It belongs to the tetrahydrofolate dehydrogenase/cyclohydrolase family. In terms of assembly, homodimer.

It catalyses the reaction (6R)-5,10-methylene-5,6,7,8-tetrahydrofolate + NADP(+) = (6R)-5,10-methenyltetrahydrofolate + NADPH. The enzyme catalyses (6R)-5,10-methenyltetrahydrofolate + H2O = (6R)-10-formyltetrahydrofolate + H(+). Its pathway is one-carbon metabolism; tetrahydrofolate interconversion. Functionally, catalyzes the oxidation of 5,10-methylenetetrahydrofolate to 5,10-methenyltetrahydrofolate and then the hydrolysis of 5,10-methenyltetrahydrofolate to 10-formyltetrahydrofolate. The chain is Bifunctional protein FolD from Bacillus velezensis (strain DSM 23117 / BGSC 10A6 / LMG 26770 / FZB42) (Bacillus amyloliquefaciens subsp. plantarum).